Consider the following 792-residue polypeptide: Phenylalanine--tRNA ligase beta subunit (792 aa).

The 109-residue stretch at 39–147 folds into the tRNA-binding domain; sequence GESLGQVVVA…DDAPVGQALA (109 aa). The 76-residue stretch at 400-475 folds into the B5 domain; that stretch reads PQPARILLRR…RIHGYDRVPT (76 aa). Residues Asp-453, Asp-459, Glu-462, and Asp-463 each coordinate Mg(2+). Positions 698–791 constitute an FDX-ACB domain; sequence SRFPSVRRDL…IEREHRARIR (94 aa).

The protein belongs to the phenylalanyl-tRNA synthetase beta subunit family. Type 1 subfamily. As to quaternary structure, tetramer of two alpha and two beta subunits. Requires Mg(2+) as cofactor.

It is found in the cytoplasm. The catalysed reaction is tRNA(Phe) + L-phenylalanine + ATP = L-phenylalanyl-tRNA(Phe) + AMP + diphosphate + H(+). This Xanthomonas oryzae pv. oryzae (strain KACC10331 / KXO85) protein is Phenylalanine--tRNA ligase beta subunit.